The chain runs to 114 residues: Small ribosomal subunit protein bS16 (114 aa).

The protein belongs to the bacterial ribosomal protein bS16 family.

This chain is Small ribosomal subunit protein bS16, found in Prochlorococcus marinus subsp. pastoris (strain CCMP1986 / NIES-2087 / MED4).